The following is a 704-amino-acid chain: Elongation factor G (704 aa).

The tr-type G domain maps to K10 to L290. Residues A19 to T26, D83 to H87, and N137 to D140 each bind GTP.

It belongs to the TRAFAC class translation factor GTPase superfamily. Classic translation factor GTPase family. EF-G/EF-2 subfamily.

The protein localises to the cytoplasm. Its function is as follows. Catalyzes the GTP-dependent ribosomal translocation step during translation elongation. During this step, the ribosome changes from the pre-translocational (PRE) to the post-translocational (POST) state as the newly formed A-site-bound peptidyl-tRNA and P-site-bound deacylated tRNA move to the P and E sites, respectively. Catalyzes the coordinated movement of the two tRNA molecules, the mRNA and conformational changes in the ribosome. This chain is Elongation factor G, found in Kocuria rhizophila (strain ATCC 9341 / DSM 348 / NBRC 103217 / DC2201).